A 215-amino-acid polypeptide reads, in one-letter code: Mediator of RNA polymerase II transcription subunit 18 (215 aa).

It belongs to the Mediator complex subunit 18 family. Component of the Mediator complex.

The protein resides in the nucleus. Its function is as follows. Component of the Mediator complex, a coactivator involved in the regulated transcription of nearly all RNA polymerase II-dependent genes. Mediator functions as a bridge to convey information from gene-specific regulatory proteins to the basal RNA polymerase II transcription machinery. Mediator is recruited to promoters by direct interactions with regulatory proteins and serves as a scaffold for the assembly of a functional preinitiation complex with RNA polymerase II and the general transcription factors. This is Mediator of RNA polymerase II transcription subunit 18 (MED18) from Aedes aegypti (Yellowfever mosquito).